Here is an 82-residue protein sequence, read N- to C-terminus: Putative membrane protein insertion efficiency factor (82 aa).

Residues 63–82 (PGGHDPVPESTILSKEKSVK) are disordered.

Belongs to the UPF0161 family.

It localises to the cell inner membrane. Functionally, could be involved in insertion of integral membrane proteins into the membrane. This chain is Putative membrane protein insertion efficiency factor, found in Protochlamydia amoebophila (strain UWE25).